The primary structure comprises 250 residues: 5'-nucleotidase SurE (250 aa).

Residues Asp-8, Asp-9, Ser-39, and Asn-95 each contribute to the a divalent metal cation site.

It belongs to the SurE nucleotidase family. A divalent metal cation serves as cofactor.

It is found in the cytoplasm. It catalyses the reaction a ribonucleoside 5'-phosphate + H2O = a ribonucleoside + phosphate. Nucleotidase that shows phosphatase activity on nucleoside 5'-monophosphates. This Cupriavidus necator (strain ATCC 17699 / DSM 428 / KCTC 22496 / NCIMB 10442 / H16 / Stanier 337) (Ralstonia eutropha) protein is 5'-nucleotidase SurE.